The chain runs to 435 residues: Diguanylate cyclase TpbB (435 aa).

The Cytoplasmic portion of the chain corresponds to 1–22 (MNRRRRYTGSNPSLRRVLYRAH). A helical membrane pass occupies residues 23 to 43 (LGVALVAVFTAGLAVTLVGLL). The Periplasmic segment spans residues 44 to 154 (TLRAYADPNQ…VKGSGGSLLR (111 aa)). Residues 155–175 (FLLTGFAGMVLCLLLTALGAF) form a helical membrane-spanning segment. Topologically, residues 176–435 (YLSRRLVRGI…DSATPEAPPK (260 aa)) are cytoplasmic. Positions 183–236 (RGIVGPLDQLAKVAHTVRRERDFEKRVPEAGIAELSQLGEDFNALLDELESWQA) constitute an HAMP domain. The GGDEF domain maps to 279–415 (EQLAVLFIDS…GSRRLAELND (137 aa)). The Mg(2+) site is built by serine 288 and aspartate 330. Catalysis depends on aspartate 330, which acts as the Proton acceptor. The span at 413–426 (LNDPRILQEEKEID) shows a compositional bias: basic and acidic residues. The tract at residues 413–435 (LNDPRILQEEKEIDSATPEAPPK) is disordered.

As to quaternary structure, homodimer. Interacts with YfiR. It depends on Mg(2+) as a cofactor. Post-translationally, phosphorylated at both Tyr residues and Ser/Thr residues. Dephosphorylated and inactivated by TpbA.

The protein localises to the cell inner membrane. It carries out the reaction 2 GTP = 3',3'-c-di-GMP + 2 diphosphate. It functions in the pathway purine metabolism; 3',5'-cyclic di-GMP biosynthesis. Activity is tightly controlled by YfiR, a small periplasmic protein, and the OmpA/Pal-like outer-membrane lipoprotein YfiB. Diguanylate cyclase activity is inhibited by the specific interaction of YfiR with the TpbB periplasmic domain and is activated by YfiB, which releases the YfiR-mediated repression through sequestration of YfiR to the outer membrane. Release of repression leads to a conformational shift in TpbB/YfiN that propagates through the PAS and transmembrane domains to switch the cytoplasmic HAMP domain from an inactive to an active conformation and activate the C-terminal catalytic GGDEF domain. Thus, TpbB/YfiN appears to function by switching between discrete inactive and active functional states depending on the presence or absence of bound YfiR. Activity is also controlled by dephosphorylation of the periplasmic domain by the tyrosine phosphatase TpbA. These two mechanisms of regulation could in principle work in parallel or as part of the same regulatory pathway. Does not undergo product feedback inhibition. In terms of biological role, catalyzes the synthesis of cyclic-di-GMP (c-di-GMP) via the condensation of 2 GTP molecules. Its function is as follows. Part of the YfiB-TpbB-YfiR (or yfiBNR) system, encoding a tripartite signaling module that modulates intracellular c-di-GMP levels. The system is a key regulator of the small colony variant (SCV) phenotype, and plays an important role in biofilm formation and in vivo persistence. The c-di-GMP produced by TpbB/YfiN stimulates the production of the Pel and Psl exopolysaccharides, which promotes surface attachment, generates an SCV phenotype and confers resistance against phagocytosis. The chain is Diguanylate cyclase TpbB from Pseudomonas aeruginosa (strain ATCC 15692 / DSM 22644 / CIP 104116 / JCM 14847 / LMG 12228 / 1C / PRS 101 / PAO1).